A 1094-amino-acid polypeptide reads, in one-letter code: MADPASPPSFDAIFAQQPVRRSSSTSTSSFANYTYSALQQHQQFNSDAPLVDEPQSLSEQARKQQRDPSKDGNNKRYLDMMSGLADGYGVINGRRQESLRKESLPFNPQEDSTLIATAPKRGERNGLGRNGYSSPIGDIMFGPEQTIPNQPQQPSQQPPWGEGRMSEQSVHYASVQQPQYSSFQSSGPGAGSAGIDYLPRGTTSSMNDSMLSSQISPYLNHDVASEGQPPQQQQQQQQQQQGEWGQEFIGVEQQQQYAQGEGQSNGMEDMLTMGDESPFESELQRVISNTSHPSQYPSRTSSPFPQQSQSNMVPASTVNQTRTESFPASRSPSPFAPQQASQTEASNHVVSTPSMGQPTYPRASSSPRTNPNSPFFNKPQSPPALIIPNSPVLPNIVTQSTSNNHSKGLNQPHTRHASNGAGGLFPPSNPALEHLTGMAGISPIAPNADGPMICIQPSTPISGLKEGRGLFDAALRRAGAARGAQRQGPQGQGESQEDRRQDGFNVPSPQSHPLPRTLSSDQVNQGVEMQGMDFAAQMQSYEQQGWANDTLRIAGPSRPRAKSDSIIPSPTADSFDRQAFLAFIGAGNAQPPPPNVEMQPGYVDVSEQWRNTVSAWKAGLGEGELNSQPTLDPRLLPGRESNEAVYQQLLMQQQTGQMPRLDPDQLHQLTQLEGQRARFSLNTNIAPPKYEPGEISPTSMVFYQSMGLYPHAAPELSGTVSAPWSQTAFGQVPGPGPVGHPATAGPAQQHFLTPTLSHATVRRRSFGGGEHPAMGAGTPGYGMEFSSPFAGKSVGQIRGVNMGHRRAARSEDFGRGGTGWGVGAGGSTAEFLQSITGDDGSLLPPSNRGHAMSHSRHSSTSSIRSASPALSISSQGSSFSHHSPRMDMPDSIYPGHPIIAPATPLQVSGLYEEQQTPARVAKMKVTSVATEVASTSRRTNSGIFKCPVPGCGSTFTRHFNLKGHLRSHNDERPFKCLYEGCPKAIVGFARQHDCKRHMLLHEGLRLFECEGCGKKFARLDALTRHHKSEQGQECAITHPLPTNFDGSPMSESQYKTYKGIKSTPEGSGRRLSSTASGSGSGKRRSKKSETSEED.

Disordered stretches follow at residues 1–29, 44–81, 93–428, and 477–519; these read MADPASPPSFDAIFAQQPVRRSSSTSTSS, FNSDAPLVDEPQSLSEQARKQQRDPSKDGNNKRYLDMM, GRRQ…FPPS, and RAGA…RTLS. 2 stretches are compositionally biased toward basic and acidic residues: residues 60-78 and 94-103; these read QARKQQRDPSKDGNNKRYL and RRQESLRKES. Phosphoserine is present on S103. The span at 148-159 shows a compositional bias: low complexity; it reads PNQPQQPSQQPP. 2 stretches are compositionally biased toward polar residues: residues 166–187 and 201–217; these read SEQSVHYASVQQPQYSSFQSSG and GTTSSMNDSMLSSQISP. 2 stretches are compositionally biased toward low complexity: residues 228-241 and 252-262; these read QPPQQQQQQQQQQQ and EQQQQYAQGEG. The span at 286–324 shows a compositional bias: polar residues; sequence VISNTSHPSQYPSRTSSPFPQQSQSNMVPASTVNQTRTE. Residues S288 and S329 each carry the phosphoserine modification. Positions 325–342 are enriched in low complexity; that stretch reads SFPASRSPSPFAPQQASQ. Polar residues-rich tracts occupy residues 343–379 and 396–412; these read TEASNHVVSTPSMGQPTYPRASSSPRTNPNSPFFNKP and IVTQSTSNNHSKGLNQP. A compositionally biased stretch (low complexity) spans 477-493; sequence RAGAARGAQRQGPQGQG. Polar residues predominate over residues 507-519; it reads PSPQSHPLPRTLS. Phosphoserine occurs at positions 508, 569, 765, and 810. The segment at 835 to 888 is disordered; sequence ITGDDGSLLPPSNRGHAMSHSRHSSTSSIRSASPALSISSQGSSFSHHSPRMDM. Positions 858-881 are enriched in low complexity; that stretch reads SSTSSIRSASPALSISSQGSSFSH. The C2H2-type 1 zinc finger occupies 944-968; sequence FKCPVPGCGSTFTRHFNLKGHLRSH. The C2H2-type 2; degenerate zinc-finger motif lies at 1007–1029; that stretch reads FECEGCGKKFARLDALTRHHKSE. The segment at 1037–1094 is disordered; the sequence is THPLPTNFDGSPMSESQYKTYKGIKSTPEGSGRRLSSTASGSGSGKRRSKKSETSEED.

Post-translationally, phosphorylated. Dephosphorylated by calcineurin (CNA1) which promotes nuclear localization.

Its subcellular location is the cytoplasm. It localises to the cytosol. The protein resides in the nucleus. In terms of biological role, DNA-binding transcriptional activator that interacts with calcineurin-dependent response element (CDRE) promoters. Activates expression of genes required to maintain cell wall integrity during stress. Activates expression of genes required for transepithelial migration through the host blood-brain barrier. Required for adaptation to host temperature during infection. This Cryptococcus neoformans var. grubii serotype A (strain H99 / ATCC 208821 / CBS 10515 / FGSC 9487) (Filobasidiella neoformans var. grubii) protein is Transcriptional regulator CRZ1.